The sequence spans 2170 residues: Supervillin (2170 aa).

The segment at 1-167 (MKRKERIARR…NSRHSRTESG (167 aa)) is interaction with MYLK. Disordered regions lie at residues 37 to 94 (EDTP…HSLE), 107 to 327 (RRRQ…QSES), 413 to 444 (PEPL…NKDL), 511 to 546 (DYTG…GAEA), and 567 to 643 (RASK…EDEE). Position 50 is a phosphoserine (S50). Composition is skewed to polar residues over residues 63-73 (PGSSLEKQTPS) and 81-90 (GIHSSGSMDT). Basic and acidic residues predominate over residues 134-166 (SRKDPDVTERRGKSDKQEEQSKDANSRHSRTES). Residues 167–195 (GPRTSLVASQDCTPLGSNMSDQEQLLNVE) are compositionally biased toward polar residues. S220, S227, and S241 each carry phosphoserine. Over residues 230-241 (QIPSSPLQQPAS) the composition is skewed to polar residues. Composition is skewed to basic and acidic residues over residues 261–272 (PTHEWFLQRDSE) and 286–297 (KVREKLVKEESA). Over residues 298 to 313 (RSSPELTSESLTQRRQ) the composition is skewed to polar residues. Phosphoserine is present on residues S299 and S300. Basic and acidic residues predominate over residues 427–444 (EDDRLVRGHKDPSGNKDL). Basic and acidic residues-rich tracts occupy residues 570-582 (KKPE…ERSA) and 606-615 (ESRKTSERFR). Phosphoserine occurs at positions 632, 666, 728, and 761. The interval 743 to 771 (ASAHQKALARDQANEGRESAEPGEPDSST) is disordered. Residues 750-762 (LARDQANEGRESA) are compositionally biased toward basic and acidic residues. Y809 is modified (phosphotyrosine). T811 carries the phosphothreonine modification. 3 positions are modified to phosphoserine: S857, S877, and S881. Residues 887 to 909 (AWRPLVEHSGSKGMPGESGKTES) are disordered. Residues S960, S1011, S1031, and S1077 each carry the phosphoserine modification. Residues 1117–1137 (HTQEVEQSLKKKRVTESRESQ) are disordered. Residues 1119 to 1137 (QEVEQSLKKKRVTESRESQ) are compositionally biased toward basic and acidic residues. R1159 is subject to Omega-N-methylarginine. Phosphoserine occurs at positions 1181 and 1184. Phosphothreonine is present on T1186. A phosphoserine mark is found at S1190, S1278, and S1361. Residues 1375-1643 (SNINLRSVNL…KFLDWTELKR (269 aa)) form an interaction with NEB region. Gelsolin-like repeat units follow at residues 1397-1496 (KKLM…LGGQ), 1516-1638 (IETN…FLDW), 1708-1818 (VSVD…FQGG), 1837-1938 (WRLY…LGRR), and 1971-2078 (ATEF…FPSW). Positions 2107–2170 (KLCKTIYPLA…VNLKKSKGLF (64 aa)) constitute an HP domain.

It belongs to the villin/gelsolin family. As to quaternary structure, associates with F-actin. Interacts with NEB. Interacts with MYH9. Interacts with MYLK. Interacts with TASOR. In terms of assembly, interacts with TRIP6. Interacts with DYNLT1. Interacts with KIF14; at midbody during cytokinesis. In terms of tissue distribution, expressed in the heart, tongue and granular cells within the cerebellum.

The protein localises to the cell membrane. Its subcellular location is the cytoplasm. It localises to the cytoskeleton. The protein resides in the cell projection. It is found in the invadopodium. The protein localises to the podosome. Its subcellular location is the midbody. It localises to the cleavage furrow. Forms a high-affinity link between the actin cytoskeleton and the membrane. Is among the first costameric proteins to assemble during myogenesis and it contributes to myogenic membrane structure and differentiation. Appears to be involved in myosin II assembly. May modulate myosin II regulation through MLCK during cell spreading, an initial step in cell migration. May play a role in invadopodial function. Functionally, may be involved in modulation of focal adhesions. Supervillin-mediated down-regulation of focal adhesions involves binding to TRIP6. Plays a role in cytokinesis through KIF14 interaction. The polypeptide is Supervillin (Svil) (Mus musculus (Mouse)).